Reading from the N-terminus, the 498-residue chain is Isoflavone 2'-hydroxylase (498 aa).

Residues 3–23 traverse the membrane as a helical segment; it reads ILSYLCYSLFYLSIFFIIRLL. Residue cysteine 436 coordinates heme.

It belongs to the cytochrome P450 family. Heme serves as cofactor. In terms of tissue distribution, expressed constitutively in roots, but present at very low levels in uninfected stems and leaves.

Its subcellular location is the endoplasmic reticulum membrane. The catalysed reaction is formononetin + reduced [NADPH--hemoprotein reductase] + O2 = 2'-hydroxyformononetin + oxidized [NADPH--hemoprotein reductase] + H2O + H(+). In terms of biological role, involved in the biosynthesis of the pterocarpin phytoalexins. Acts on isoflavones with a 4'-methoxy group on the B-ring, such as formononetin and biochanin A, and on pseudobaptigenin. Has a low activity with daidzein and genistein and no activity with the 7-O-methylated isoflavonoids isoformononetin and prunetin. The polypeptide is Isoflavone 2'-hydroxylase (Medicago truncatula (Barrel medic)).